Here is a 475-residue protein sequence, read N- to C-terminus: Beta-amyrin 28-monooxygenase (475 aa).

A helical membrane pass occupies residues 2-22 (YLTILFLFVSSILLSLMFLLR). Heme is bound at residue C422.

Belongs to the cytochrome P450 family. It depends on heme as a cofactor.

It is found in the membrane. It carries out the reaction beta-amyrin + 3 reduced [NADPH--hemoprotein reductase] + 3 O2 = oleanolate + 3 oxidized [NADPH--hemoprotein reductase] + 4 H2O + 4 H(+). In terms of biological role, catalyzes the oxidation of the methyl group to a carboxyl group at the C-28 position of beta-amyrin to form oleanolate. The polypeptide is Beta-amyrin 28-monooxygenase (Barbarea vulgaris (Yellow rocket)).